Consider the following 366-residue polypeptide: 5-formaminoimidazole-4-carboxamide-1-(beta)-D-ribofuranosyl 5'-monophosphate synthetase (366 aa).

Positions 27 and 96 each coordinate 5-amino-1-(5-phospho-beta-D-ribosyl)imidazole-4-carboxamide. One can recognise an ATP-grasp domain in the interval 131-357 (RKWLEDAGVP…IAREIKEAVK (227 aa)). Residues 154–208 (PVIV…VRFY) and glutamate 239 each bind ATP. Asparagine 263 provides a ligand contact to 5-amino-1-(5-phospho-beta-D-ribosyl)imidazole-4-carboxamide. Mg(2+) is bound by residues glutamate 302 and glutamate 315.

The protein belongs to the phosphohexose mutase family. Requires Mg(2+) as cofactor. The cofactor is Mn(2+).

It catalyses the reaction 5-amino-1-(5-phospho-beta-D-ribosyl)imidazole-4-carboxamide + formate + ATP = 5-formamido-1-(5-phospho-D-ribosyl)imidazole-4-carboxamide + ADP + phosphate. It functions in the pathway purine metabolism; IMP biosynthesis via de novo pathway; 5-formamido-1-(5-phospho-D-ribosyl)imidazole-4-carboxamide from 5-amino-1-(5-phospho-D-ribosyl)imidazole-4-carboxamide (formate route): step 1/1. Its function is as follows. Catalyzes the ATP- and formate-dependent formylation of 5-aminoimidazole-4-carboxamide-1-beta-d-ribofuranosyl 5'-monophosphate (AICAR) to 5-formaminoimidazole-4-carboxamide-1-beta-d-ribofuranosyl 5'-monophosphate (FAICAR) in the absence of folates. In Korarchaeum cryptofilum (strain OPF8), this protein is 5-formaminoimidazole-4-carboxamide-1-(beta)-D-ribofuranosyl 5'-monophosphate synthetase.